The following is a 567-amino-acid chain: Wee1-like protein kinase 2 (567 aa).

Basic and acidic residues-rich tracts occupy residues 1–12 (MDDKDIDKELRQ), 25–35 (EGQKKVEESRE), 42–51 (EKGEVQDSEA), and 64–77 (HELD…KESP). The tract at residues 1-117 (MDDKDIDKEL…DSPSTPKTML (117 aa)) is disordered. A Phosphoserine modification is found at S76. The Nuclear localization signal signature appears at 173–175 (KRK). The Protein kinase domain occupies 212 to 486 (FLEVEKIGVG…AAALARNTVL (275 aa)). Residues 218-226 (IGVGEFGTV) and K241 each bind ATP. Positions 315 to 329 (KLKDILLQISLGLNY) match the Nuclear export signal motif. Residue D339 is the Proton acceptor of the active site. The Mg(2+) site is built by N344 and D380. Residues 494–519 (EELQQQLNLEKFKTATLERELREAQQ) are a coiled coil. A disordered region spans residues 514-567 (LREAQQAQSPQGYTHHGDTGVSGTHTGSRSTKRLVGGKSARSSSFTSGEREPLH).

Belongs to the protein kinase superfamily. Ser/Thr protein kinase family. WEE1 subfamily. In terms of processing, phosphorylated on serine residues. Phosphorylation leads to increase its activity. In terms of tissue distribution, expressed in oocytes (at protein level). May also be expressed in testis.

The protein localises to the nucleus. The enzyme catalyses L-tyrosyl-[protein] + ATP = O-phospho-L-tyrosyl-[protein] + ADP + H(+). In terms of biological role, oocyte-specific protein tyrosine kinase that phosphorylates and inhibits CDK1/CDC2 and acts as a key regulator of meiosis during both prophase I and metaphase II. Required to maintain meiotic arrest in oocytes during the germinal vesicle (GV) stage, a long period of quiescence at dictyate prophase I, by phosphorylating CDK1 at 'Tyr-15', leading to inhibit CDK1 activity and prevent meiotic reentry. Also required for metaphase II exit during egg activation by phosphorylating CDK1 at 'Tyr-15', to ensure exit from meiosis in oocytes and promote pronuclear formation. The protein is Wee1-like protein kinase 2 (WEE2) of Homo sapiens (Human).